We begin with the raw amino-acid sequence, 388 residues long: Chaperone protein DnaJ 1 (388 aa).

The J domain maps to 10–74; that stretch reads DFYKELGVSS…VKRKEYDETR (65 aa). The CR-type zinc-finger motif lies at 159–237; it reads GVAMPLRLTS…CKGTGVTTRT (79 aa). The Zn(2+) site is built by Cys172, Cys175, Cys189, Cys192, Cys211, Cys214, Cys225, and Cys228. 4 CXXCXGXG motif repeats span residues 172–179, 189–196, 211–218, and 225–232; these read CTNCHGSG, CSTCNGSG, CTECRGSG, and CEECKGTG.

It belongs to the DnaJ family. In terms of assembly, homodimer. Zn(2+) serves as cofactor.

It localises to the cytoplasm. In terms of biological role, participates actively in the response to hyperosmotic and heat shock by preventing the aggregation of stress-denatured proteins and by disaggregating proteins, also in an autonomous, DnaK-independent fashion. Unfolded proteins bind initially to DnaJ; upon interaction with the DnaJ-bound protein, DnaK hydrolyzes its bound ATP, resulting in the formation of a stable complex. GrpE releases ADP from DnaK; ATP binding to DnaK triggers the release of the substrate protein, thus completing the reaction cycle. Several rounds of ATP-dependent interactions between DnaJ, DnaK and GrpE are required for fully efficient folding. Also involved, together with DnaK and GrpE, in the DNA replication of plasmids through activation of initiation proteins. This is Chaperone protein DnaJ 1 from Mycobacterium leprae (strain TN).